The sequence spans 486 residues: Cardiolipin synthase A (486 aa).

The next 2 membrane-spanning stretches (helical) occupy residues 3–23 (TFYT…IAGV) and 38–58 (MAWL…YLSF). PLD phosphodiesterase domains follow at residues 219–246 (MDLR…VDPR) and 399–426 (EGGL…DMRS). Residues His-224, Lys-226, Asp-231, His-404, Lys-406, and Asp-411 contribute to the active site.

The protein belongs to the phospholipase D family. Cardiolipin synthase subfamily. ClsA sub-subfamily.

It localises to the cell inner membrane. It carries out the reaction 2 a 1,2-diacyl-sn-glycero-3-phospho-(1'-sn-glycerol) = a cardiolipin + glycerol. Functionally, catalyzes the reversible phosphatidyl group transfer from one phosphatidylglycerol molecule to another to form cardiolipin (CL) (diphosphatidylglycerol) and glycerol. The protein is Cardiolipin synthase A of Yersinia pseudotuberculosis serotype O:1b (strain IP 31758).